We begin with the raw amino-acid sequence, 326 residues long: Arabinose 5-phosphate isomerase KdsD (326 aa).

Positions alanine 38–phenylalanine 181 constitute an SIS domain. Substrate-binding positions include glycine 72–threonine 73, histidine 79, histidine 85, threonine 111–glycine 120, and serine 145–glycine 147. Histidine 79 serves as a coordination point for Zn(2+). CBS domains follow at residues methionine 207–valine 265 and methionine 274–methionine 326.

It belongs to the SIS family. GutQ/KpsF subfamily. Homotetramer.

It catalyses the reaction D-arabinose 5-phosphate = D-ribulose 5-phosphate. Its pathway is carbohydrate biosynthesis; 3-deoxy-D-manno-octulosonate biosynthesis; 3-deoxy-D-manno-octulosonate from D-ribulose 5-phosphate: step 1/3. It participates in bacterial outer membrane biogenesis; lipopolysaccharide biosynthesis. Functionally, involved in the biosynthesis of 3-deoxy-D-manno-octulosonate (KDO), a unique 8-carbon sugar component of lipopolysaccharides (LPSs). Catalyzes the reversible aldol-ketol isomerization between D-ribulose 5-phosphate (Ru5P) and D-arabinose 5-phosphate (A5P). The protein is Arabinose 5-phosphate isomerase KdsD (kdsD) of Pseudomonas aeruginosa (strain ATCC 15692 / DSM 22644 / CIP 104116 / JCM 14847 / LMG 12228 / 1C / PRS 101 / PAO1).